The primary structure comprises 5488 residues: Polyketide synthase PksN (5488 aa).

The condensation stretch occupies residues 3-301; it reads RQLKSPLSEG…NMMAVRSKNI (299 aa). The stretch at 165-205 is one WD 1 repeat; sequence QQPSTADYYDFVDWENRMLTGREGEEHLAYWKEQLSGSLPV. An adenylation region spans residues 493–903; sequence TYKEVDEKST…EFPGILDQAV (411 aa). The WD 2 repeat unit spans residues 965–1006; the sequence is RKELEKREIVFNRRKPNHLQLTEIEDQVLRIWEETLKVSGFG. The region spanning 983 to 1058 is the Carrier 1 domain; the sequence is LQLTEIEDQV…AISEYILEMK (76 aa). Ser-1018 is subject to O-(pantetheine 4'-phosphoryl)serine. Residues 1089 to 1515 enclose the Ketosynthase family 3 (KS3) 1 domain; the sequence is DDSVAIVGIS…GTNAHAIFEQ (427 aa). Active-site for beta-ketoacyl synthase 1 activity residues include Cys-1261, His-1397, and His-1437. An N-terminal hotdog fold 1 region spans residues 1700 to 1826; sequence HPLVHHNTSV…GKAELIQLKR (127 aa). The 293-residue stretch at 1700 to 1992 folds into the PKS/mFAS DH 1 domain; the sequence is HPLVHHNTSV…TRVMEADIQT (293 aa). His-1729 functions as the Proton acceptor; for dehydratase activity 1 in the catalytic mechanism. Residues 1840–1992 are C-terminal hotdog fold 1; sequence DQSKMDAASF…TRVMEADIQT (153 aa). Asp-1900 (proton donor; for dehydratase activity 1) is an active-site residue. The WD 3 repeat unit spans residues 2165–2204; it reads KQAKGDGSKPWKDNGVYLISGGAGGLGHIFAKEIAEQTKN. Positions 2448 to 2525 constitute a Carrier 2 domain; that stretch reads SLLDKVKAML…AFGKHLSEEY (78 aa). O-(pantetheine 4'-phosphoryl)serine is present on Ser-2485. The Ketosynthase family 3 (KS3) 2 domain maps to 2576-3012; sequence PEPIAIVGIS…GVNAHVIIEE (437 aa). Catalysis depends on for beta-ketoacyl synthase 2 activity residues Cys-2747, His-2882, and His-2928. Residues 3038–3109 are a coiled coil; sequence KNEARLKEHA…AAEKSGVEDV (72 aa). The interval 3207–3332 is N-terminal hotdog fold 2; that stretch reads HPLMHQNTSN…GSAVLNPAEN (126 aa). The region spanning 3207–3492 is the PKS/mFAS DH 2 domain; that stretch reads HPLMHQNTSN…FRAAEGGSGS (286 aa). His-3236 functions as the Proton acceptor; for dehydratase activity 2 in the catalytic mechanism. Residues 3346-3492 form a C-terminal hotdog fold 2 region; it reads QESHFSVNEV…FRAAEGGSGS (147 aa). Catalysis depends on Asp-3408, which acts as the Proton donor; for dehydratase activity 2. Residues 3626–3655 adopt a coiled-coil conformation; it reads DSHENVESVIEKLKENKRHTEDQHIKYEKG. The stretch at 3666–3705 is one WD 4 repeat; it reads QIDDREISMPWRDKGVYLITGGAGGLGFIFAKEIARQAEQ. Residues 3952–4026 form the Carrier 3 domain; the sequence is DHIQEVLKQT…AFAGYLSEEY (75 aa). Ser-3986 carries the O-(pantetheine 4'-phosphoryl)serine modification. Residues 4076–4511 enclose the Ketosynthase family 3 (KS3) 3 domain; the sequence is PEPIAIVGMS…GVNAHVVIEE (436 aa). Catalysis depends on for beta-ketoacyl synthase 3 activity residues Cys-4245, His-4380, and His-4427. The segment at 4706-4830 is N-terminal hotdog fold 3; sequence HPLIHVNTSD…GSASIRGAGD (125 aa). A PKS/mFAS DH 3 domain is found at 4706–4988; that stretch reads HPLIHVNTSD…SRLLEEGIQP (283 aa). The active-site Proton acceptor; for dehydratase activity 3 is His-4735. The segment at 4844–4988 is C-terminal hotdog fold 3; that stretch reads SLSTLSHDQC…SRLLEEGIQP (145 aa). Catalysis depends on Asp-4906, which acts as the Proton donor; for dehydratase activity 3. The WD 5 repeat unit spans residues 5206–5244; that stretch reads HNNQPVHTKYKHGGVYVVIGGAGGIGEAWSEYMIRTYQA. A coiled-coil region spans residues 5275–5303; that stretch reads IQADAANREELERAYETMKQTHREINGII.

It belongs to the ATP-dependent AMP-binding enzyme family. The cofactor is pantetheine 4'-phosphate.

The protein localises to the cytoplasm. Its pathway is antibiotic biosynthesis; bacillaene biosynthesis. In terms of biological role, involved in some intermediate steps for the synthesis of the antibiotic polyketide bacillaene which is involved in secondary metabolism. This chain is Polyketide synthase PksN (pksN), found in Bacillus subtilis (strain 168).